The sequence spans 237 residues: Sugar fermentation stimulation protein homolog (237 aa).

This sequence belongs to the SfsA family.

This is Sugar fermentation stimulation protein homolog from Pseudomonas syringae pv. tomato (strain ATCC BAA-871 / DC3000).